The following is a 615-amino-acid chain: Dihydroxy-acid dehydratase (615 aa).

Residue D85 coordinates Mg(2+). C126 contacts [2Fe-2S] cluster. 2 residues coordinate Mg(2+): D127 and K128. The residue at position 128 (K128) is an N6-carboxylysine. C199 provides a ligand contact to [2Fe-2S] cluster. Mg(2+) is bound at residue E495. Catalysis depends on S521, which acts as the Proton acceptor.

This sequence belongs to the IlvD/Edd family. In terms of assembly, homodimer. The cofactor is [2Fe-2S] cluster. Requires Mg(2+) as cofactor.

It catalyses the reaction (2R)-2,3-dihydroxy-3-methylbutanoate = 3-methyl-2-oxobutanoate + H2O. The catalysed reaction is (2R,3R)-2,3-dihydroxy-3-methylpentanoate = (S)-3-methyl-2-oxopentanoate + H2O. It participates in amino-acid biosynthesis; L-isoleucine biosynthesis; L-isoleucine from 2-oxobutanoate: step 3/4. Its pathway is amino-acid biosynthesis; L-valine biosynthesis; L-valine from pyruvate: step 3/4. Functionally, functions in the biosynthesis of branched-chain amino acids. Catalyzes the dehydration of (2R,3R)-2,3-dihydroxy-3-methylpentanoate (2,3-dihydroxy-3-methylvalerate) into 2-oxo-3-methylpentanoate (2-oxo-3-methylvalerate) and of (2R)-2,3-dihydroxy-3-methylbutanoate (2,3-dihydroxyisovalerate) into 2-oxo-3-methylbutanoate (2-oxoisovalerate), the penultimate precursor to L-isoleucine and L-valine, respectively. This Mannheimia succiniciproducens (strain KCTC 0769BP / MBEL55E) protein is Dihydroxy-acid dehydratase.